The primary structure comprises 525 residues: Bifunctional purine biosynthesis protein PurH (525 aa).

One can recognise an MGS-like domain in the interval 1-149 (MSDPVIKRAL…KNHESVTVIT (149 aa)).

Belongs to the PurH family.

It carries out the reaction (6R)-10-formyltetrahydrofolate + 5-amino-1-(5-phospho-beta-D-ribosyl)imidazole-4-carboxamide = 5-formamido-1-(5-phospho-D-ribosyl)imidazole-4-carboxamide + (6S)-5,6,7,8-tetrahydrofolate. The catalysed reaction is IMP + H2O = 5-formamido-1-(5-phospho-D-ribosyl)imidazole-4-carboxamide. It participates in purine metabolism; IMP biosynthesis via de novo pathway; 5-formamido-1-(5-phospho-D-ribosyl)imidazole-4-carboxamide from 5-amino-1-(5-phospho-D-ribosyl)imidazole-4-carboxamide (10-formyl THF route): step 1/1. The protein operates within purine metabolism; IMP biosynthesis via de novo pathway; IMP from 5-formamido-1-(5-phospho-D-ribosyl)imidazole-4-carboxamide: step 1/1. This chain is Bifunctional purine biosynthesis protein PurH, found in Chlorobium phaeobacteroides (strain BS1).